Here is a 385-residue protein sequence, read N- to C-terminus: Glucans biosynthesis protein C (385 aa).

10 helical membrane passes run 17-37 (AWLMLLGIPFHISLIYSSHTW), 60-80 (MQVFFVISGYFSYMLFLRYPL), 91-111 (VGIPMLTAIPLLTLPQFIMLQ), 137-157 (ISHLWFLLVLVVMTTLCVWIF), 173-193 (KFSMVKLSVIFLCLGIGYAVI), 212-232 (FIVMQTLFYLPFFILGALAFI), 239-259 (LFTTPSRGCTLAAALAFVAYL), 274-294 (TESVITMVLGLWMVNVVFSFG), 311-331 (ASLFIYLVHHPLTLFFGAYIT), and 338-358 (WLGFLCGLIFVVGIAIILYEI).

This sequence belongs to the acyltransferase 3 family. OpgC subfamily.

It is found in the cell membrane. It functions in the pathway glycan metabolism; osmoregulated periplasmic glucan (OPG) biosynthesis. Functionally, necessary for the succinyl substitution of periplasmic glucans. Could catalyze the transfer of succinyl residues from the cytoplasmic side of the membrane to the nascent glucan backbones on the periplasmic side of the membrane. In Escherichia coli (strain K12 / MC4100 / BW2952), this protein is Glucans biosynthesis protein C.